The following is a 572-amino-acid chain: Urease subunit alpha (572 aa).

One can recognise a Urease domain in the interval 136–572 (GGIDTHIHWI…VPLAQRYFLF (437 aa)). Ni(2+) is bound by residues His141, His143, and Lys224. Residue Lys224 is modified to N6-carboxylysine. His226 contributes to the substrate binding site. The Ni(2+) site is built by His253 and His279. Catalysis depends on His327, which acts as the Proton donor. Asp367 is a binding site for Ni(2+).

Belongs to the metallo-dependent hydrolases superfamily. Urease alpha subunit family. In terms of assembly, heterotrimer of UreA (gamma), UreB (beta) and UreC (alpha) subunits. Three heterotrimers associate to form the active enzyme. Requires Ni cation as cofactor. In terms of processing, carboxylation allows a single lysine to coordinate two nickel ions.

The protein resides in the cytoplasm. The enzyme catalyses urea + 2 H2O + H(+) = hydrogencarbonate + 2 NH4(+). Its pathway is nitrogen metabolism; urea degradation; CO(2) and NH(3) from urea (urease route): step 1/1. The polypeptide is Urease subunit alpha (Actinobacillus pleuropneumoniae serotype 5b (strain L20)).